A 296-amino-acid chain; its full sequence is Non-selective voltage-gated ion channel VDAC2 (296 aa).

Residue Lys25 participates in ATP binding. A Glycyl lysine isopeptide (Lys-Gly) (interchain with G-Cter in ubiquitin) cross-link involves residue Lys25. Phosphoserine is present on Ser26. Residue Lys33 participates in ATP binding. Position 33 is an N6-acetyllysine; alternate (Lys33). Lys33 carries the N6-succinyllysine; alternate modification. Residue Lys33 forms a Glycyl lysine isopeptide (Lys-Gly) (interchain with G-Cter in ubiquitin); alternate linkage. 2 beta stranded membrane-spanning segments follow: residues 39-48 (LVKLDVKTKS) and 52-60 (VEFTTSGSS). Residues Lys66 and Lys74 each participate in a glycyl lysine isopeptide (Lys-Gly) (interchain with G-Cter in ubiquitin) cross-link. Residues 67–77 (VNGSLETKYKW) form a beta stranded membrane-spanning segment. Position 80 is a phosphotyrosine (Tyr80). 3 beta stranded membrane-spanning segments follow: residues 82 to 89 (LTFTEKWN), 93 to 102 (TLGTEIAIED), and 108 to 117 (LKLTFDTTFS). Thr120 carries the post-translational modification Phosphothreonine. Lys122 is modified (N6-acetyllysine; alternate). Lys122 is covalently cross-linked (Glycyl lysine isopeptide (Lys-Gly) (interchain with G-Cter in ubiquitin); alternate). A Glycyl lysine isopeptide (Lys-Gly) (interchain with G-Cter in ubiquitin) cross-link involves residue Lys123. The next 4 membrane-spanning stretches (beta stranded) occupy residues 124 to 133 (SGKIKSAYKR), 136 to 143 (LNLGCDVD), 150 to 158 (AIHGSAVFG), and 163 to 171 (LAGYQMTFD). Residue Lys174 forms a Glycyl lysine isopeptide (Lys-Gly) (interchain with G-Cter in ubiquitin) linkage. The next 6 membrane-spanning stretches (beta stranded) occupy residues 176 to 188 (KLTR…GYKT), 191 to 198 (FQLHTNVN), 202 to 211 (EFGGSIYQKV), 215 to 224 (LETAVNLAWT), 231 to 240 (RFGIAAKYKL), and 244 to 251 (ASISAKVN). Ser206 carries the post-translational modification Phosphoserine. Ser253 is modified (phosphoserine). NAD(+) is bound by residues 255–257 (LVG) and 273–277 (SALID). The next 2 beta stranded transmembrane spans lie at 255-264 (LVGVGYTQTL) and 267-276 (GVKLTLSALI). Lys279 is modified (N6-acetyllysine; alternate). Residue Lys279 forms a Glycyl lysine isopeptide (Lys-Gly) (interchain with G-Cter in ubiquitin); alternate linkage. The beta stranded transmembrane segment at 286-295 (HKLGLGLELE) threads the bilayer. A Glycyl lysine isopeptide (Lys-Gly) (interchain with G-Cter in ubiquitin) cross-link involves residue Lys287.

It belongs to the eukaryotic mitochondrial porin family. As to quaternary structure, monomer, homodimer and higher order oligomers; formation of higher order structures is necessary for scramblase activity. In terms of processing, ubiquitinated by PRKN during mitophagy, leading to its degradation and enhancement of mitophagy. Deubiquitinated by USP30.

It localises to the mitochondrion outer membrane. It is found in the membrane. It catalyses the reaction chloride(in) = chloride(out). The catalysed reaction is K(+)(in) = K(+)(out). The enzyme catalyses a 1,2-diacyl-sn-glycero-3-phospho-L-serine(in) = a 1,2-diacyl-sn-glycero-3-phospho-L-serine(out). It carries out the reaction a 1,2-diacyl-sn-glycero-3-phosphocholine(in) = a 1,2-diacyl-sn-glycero-3-phosphocholine(out). It catalyses the reaction a 1,2-diacyl-sn-glycero-3-phospho-(1D-myo-inositol)(in) = a 1,2-diacyl-sn-glycero-3-phospho-(1D-myo-inositol)(out). Non-selective voltage-gated ion channel that mediates the transport of anions and cations through the mitochondrion outer membrane and plasma membrane. The channel adopts an open conformation at zero mV and a closed conformation at both positive and negative potentials. There are two populations of channels; the main that functions in a lower open-state conductance with lower ion selectivity, that switch, in a voltage-dependent manner, from the open to a low-conducting 'closed' state and the other that has a normal ion selectivity in the typical high conductance, 'open' state. Binds various lipids, including the sphingolipid ceramide, the phospholipid phosphatidylcholine, and the sterols cholesterol and oxysterol. Binding of ceramide promotes the mitochondrial outer membrane permeabilization (MOMP) apoptotic pathway. In terms of biological role, catalyzes the scrambling of phospholipids across the outer mitochondrial membrane; the mechanism is unrelated to channel activity and is capable of translocating both anionic and zwitterionic phospholipids. In Meleagris gallopavo (Wild turkey), this protein is Non-selective voltage-gated ion channel VDAC2.